Reading from the N-terminus, the 129-residue chain is Keratin-associated protein 5-6 (129 aa).

6 repeat units span residues 28–31, 34–37, 40–43, 90–93, 109–112, and 119–122. The 6 X 4 AA repeats of C-C-X-P stretch occupies residues 28–112; the sequence is CCVPICCCKP…SCCQSSCCKP (85 aa).

Belongs to the KRTAP type 5 family. As to quaternary structure, interacts with hair keratins. As to expression, expressed in hair root and not in skin. Expressed also in liver and skeletal muscle.

Its function is as follows. In the hair cortex, hair keratin intermediate filaments are embedded in an interfilamentous matrix, consisting of hair keratin-associated protein (KRTAP), which are essential for the formation of a rigid and resistant hair shaft through their extensive disulfide bond cross-linking with abundant cysteine residues of hair keratins. The matrix proteins include the high-sulfur and high-glycine-tyrosine keratins. In Homo sapiens (Human), this protein is Keratin-associated protein 5-6 (KRTAP5-6).